Reading from the N-terminus, the 614-residue chain is UvrABC system protein C (614 aa).

Residues threonine 14–isoleucine 91 form the GIY-YIG domain. Residues aspartate 196–leucine 231 form the UVR domain. Positions leucine 595–proline 614 are disordered. Over residues alanine 599–proline 614 the composition is skewed to basic and acidic residues.

This sequence belongs to the UvrC family. In terms of assembly, interacts with UvrB in an incision complex.

The protein localises to the cytoplasm. In terms of biological role, the UvrABC repair system catalyzes the recognition and processing of DNA lesions. UvrC both incises the 5' and 3' sides of the lesion. The N-terminal half is responsible for the 3' incision and the C-terminal half is responsible for the 5' incision. This chain is UvrABC system protein C, found in Streptococcus pneumoniae serotype 2 (strain D39 / NCTC 7466).